We begin with the raw amino-acid sequence, 580 residues long: Frizzled-10-B (580 aa).

The signal sequence occupies residues 1 to 20 (MEPRVVTALLLSLAAALCSG). Residues 21–224 (ISSINPDRSG…DVYWSKNDKK (204 aa)) lie on the Extracellular side of the membrane. In terms of domain architecture, FZ spans 29-150 (SGEGRCQAIE…NDPNYLCMEA (122 aa)). 5 disulfide bridges follow: Cys-34-Cys-95, Cys-42-Cys-88, Cys-79-Cys-117, Cys-106-Cys-147, and Cys-110-Cys-134. N-linked (GlcNAc...) asparagine glycosylation is present at Asn-48. N-linked (GlcNAc...) asparagine glycosylation occurs at Asn-153. The segment at 173–194 (RPNSGHEMYPKDPKGRSSCENS) is disordered. The span at 180–189 (MYPKDPKGRS) shows a compositional bias: basic and acidic residues. Residues 225 to 245 (FAFIWIAIWSLLCFFSSAFTV) form a helical membrane-spanning segment. Residues 246-261 (LTFLVDPLRFKYPERP) are Cytoplasmic-facing. A helical transmembrane segment spans residues 262–282 (IIFLSMCYCVYSVGYIIRLFA). Residues 283-309 (GADSIACDRDSGQLYVIQEGLESTGCT) lie on the Extracellular side of the membrane. The helical transmembrane segment at 310 to 330 (IVFLILYYFGMASSLWWVILT) threads the bilayer. The Cytoplasmic portion of the chain corresponds to 331–350 (LTWFLAAGKKWGHEAIEANS). The chain crosses the membrane as a helical span at residues 351-371 (SYFHLAAWAIPAVKTIMILVM). The Extracellular segment spans residues 372–392 (RRVAGDELTGVCYVGSMDVNA). A helical transmembrane segment spans residues 393–413 (LTGFVLIPLACYLIIGTSFIL). At 414–442 (SGFVALFHIRRVMKTGGENTDKLEKLMVR) the chain is on the cytoplasmic side. A helical membrane pass occupies residues 443–463 (IGVFSVLYTVPATCVIACYFY). The Extracellular portion of the chain corresponds to 464–501 (ERLNMDFWKILATQDKCKMDSQTKTLDCTMTSSIPAVE). Residues 502-522 (IFMVKIFMLLVVGITSGMWIW) form a helical membrane-spanning segment. Residues 523 to 580 (TSKTVQSWQNVFSKSLKKRNRNKPASVITSAGIYKKPQQPPKIHHGKYESALRSPTCV) lie on the Cytoplasmic side of the membrane. A Lys-Thr-X-X-X-Trp motif, mediates interaction with the PDZ domain of Dvl family members motif is present at residues 525 to 530 (KTVQSW). The tract at residues 558-580 (KPQQPPKIHHGKYESALRSPTCV) is disordered. The PDZ-binding motif lies at 578–580 (TCV).

The protein belongs to the G-protein coupled receptor Fz/Smo family. Expressed in liver, lung, brain, testis, heart and ovary.

The protein resides in the cell membrane. In terms of biological role, receptor for Wnt proteins. Most of frizzled receptors are coupled to the beta-catenin canonical signaling pathway, which leads to the activation of disheveled proteins, inhibition of GSK-3 kinase, nuclear accumulation of beta-catenin and activation of Wnt target genes. A second signaling pathway involving PKC and calcium fluxes has been seen for some family members, but it is not yet clear if it represents a distinct pathway or if it can be integrated in the canonical pathway, as PKC seems to be required for Wnt-mediated inactivation of GSK-3 kinase. Both pathways seem to involve interactions with G-proteins. May be involved in transduction and intercellular transmission of polarity information during tissue morphogenesis and/or in differentiated tissues. Activated by Wnt8. Could have an antagonizing activity in the morphogenesis during development. This Xenopus laevis (African clawed frog) protein is Frizzled-10-B (fzd10-b).